The chain runs to 385 residues: Methionine aminopeptidase 1 (385 aa).

The segment at 6–59 (SRVCETEGCSSEAKLQCPTCIKLGIQGSYFCSQECFKGSWATHKLLHKKAKDDK) adopts a C6H2-type zinc-finger fold. The Zn(2+) site is built by Cys9, Cys14, Cys22, Cys25, Cys36, Cys40, His48, and His52. His203 serves as a coordination point for a protein. Zn(2+) is bound by residues Asp220, Asp231, and His294. His301 serves as a coordination point for a protein. Residues Glu327 and Glu358 each contribute to the Zn(2+) site.

It belongs to the peptidase M24A family. Methionine aminopeptidase type 1 subfamily. Associates with the 60S ribosomal subunit of the 80S translational complex. Zn(2+) is required as a cofactor. Requires Co(2+) as cofactor. The cofactor is Mn(2+). Fe(2+) serves as cofactor.

It localises to the cytoplasm. The enzyme catalyses Release of N-terminal amino acids, preferentially methionine, from peptides and arylamides.. Its function is as follows. Cotranslationally removes the N-terminal methionine from nascent proteins. The N-terminal methionine is often cleaved when the second residue in the primary sequence is small and uncharged (Met-Ala-, Cys, Gly, Pro, Ser, Thr, or Val). The protein is Methionine aminopeptidase 1 (metap1) of Xenopus laevis (African clawed frog).